Here is a 433-residue protein sequence, read N- to C-terminus: MATSGDCPRSESQGEEPAECSEAGLLQEGVQPEEFVAIADYAATDETQLSFLRGEKILILRQTTADWWWGERAGCCGYIPANHVGKHVDEYDPEDTWQDEEYFGSYGTLKLHLEMLADQPRTTKYHSVILQNKESLTDKVILDVGCGTGIISLFCAHYARPRAVYAVEASEMAQHTGQLVLQNGFADIITVYQQKVEDVVLPEKVDVLVSEWMGTCLLFEFMIESILYARDAWLKEDGVIWPTMAALHLVPCSADKDYRSKVLFWDNAYEFNLSALKSLAVKEFFSKPKYNHILKPEDCLSEPCTILQLDMRTVQISDLETLRGELRFDIRKAGTLHGFTAWFSVHFQSLQEGQPPQVLSTGPFHPTTHWKQTLFMMDDPVPVHTGDVVTGSVVLQRNPVWRRHMSVALSWAVTSRQDPTSQKVGEKVFPIWR.

A disordered region spans residues 1-20 (MATSGDCPRSESQGEEPAEC). Interaction with ESR1 regions lie at residues 1–277 (MATS…SALK) and 133–275 (KESL…NLSA). Residues 30–89 (VQPEEFVAIADYAATDETQLSFLRGEKILILRQTTADWWWGERAGCCGYIPANHVGKHVD) enclose the SH3 domain. R61 and R72 each carry asymmetric dimethylarginine. Residues 83-207 (HVGKHVDEYD…DVVLPEKVDV (125 aa)) form an interaction with RB1 region. The SAM-dependent MTase PRMT-type domain occupies 99 to 432 (DEEYFGSYGT…KVGEKVFPIW (334 aa)). S-adenosyl-L-methionine-binding residues include H112, R121, G145, E168, and E197. Residues E211 and E220 contribute to the active site.

Belongs to the class I-like SAM-binding methyltransferase superfamily. Protein arginine N-methyltransferase family. In terms of assembly, self-associates. Interacts with RB1 and E2F1. Interacts with NCOA6 coactivator. Interacts (via SH3 domain) with PRMT8. Interacts with AR. Interacts with NFKBIA. Interacts with ESR1, ESR2, PGR, PPARG, RARA, RXRA and THRB. Interacts with HNRNPUL1. Widely expressed. Highly expressed in androgen target organs such as heart, prostate, skeletal muscle, ovary and spinal cord.

Its subcellular location is the cytoplasm. It localises to the nucleus. It is found in the nucleolus. It carries out the reaction L-arginyl-[protein] + 2 S-adenosyl-L-methionine = N(omega),N(omega)-dimethyl-L-arginyl-[protein] + 2 S-adenosyl-L-homocysteine + 2 H(+). Functionally, arginine methyltransferase that methylates the guanidino nitrogens of arginyl residues in proteins such as STAT3, FBL, histone H4. Acts as a coactivator (with NCOA2) of the androgen receptor (AR)-mediated transactivation. Acts as a coactivator (with estrogen) of estrogen receptor (ER)-mediated transactivation. Enhances PGR, PPARG, RARA-mediated transactivation. May inhibit NF-kappa-B transcription and promote apoptosis. Represses E2F1 transcriptional activity (in a RB1-dependent manner). May be involved in growth regulation. The chain is Protein arginine N-methyltransferase 2 (PRMT2) from Homo sapiens (Human).